We begin with the raw amino-acid sequence, 825 residues long: NT-3 growth factor receptor (825 aa).

A signal peptide spans 1 to 31 (MDVSLCPAKCSFWRIFLLGSVWLDYVGSVLA). Cystine bridges form between cysteine 32/cysteine 38 and cysteine 36/cysteine 45. Topologically, residues 32–429 (CPANCVCSKT…TVTHKPEEDT (398 aa)) are extracellular. N-linked (GlcNAc...) asparagine glycosylation is found at asparagine 68, asparagine 72, and asparagine 79. 2 LRR repeats span residues 104–125 (GLQKLTIRNSGLRSIQPRAFAK) and 128–149 (HLRYINLSSNRLTTLSWQLFQT). Residues asparagine 133 and asparagine 163 are each glycosylated (N-linked (GlcNAc...) asparagine). An LRRCT domain is found at 160 to 209 (NFFNCSCDIRWMQLWQEQGEAKLNNQNLYCINADGSQLPLFRMNISQCDL). Disulfide bonds link cysteine 164–cysteine 189 and cysteine 166–cysteine 207. Residues asparagine 203, asparagine 218, asparagine 232, asparagine 259, asparagine 267, asparagine 272, and asparagine 294 are each glycosylated (N-linked (GlcNAc...) asparagine). Ig-like C2-type domains follow at residues 210–300 (PEIS…VALT) and 309–382 (SLEE…IAKN). Cysteine 231 and cysteine 284 are joined by a disulfide. Cysteines 320 and 362 form a disulfide. Asparagine 375 and asparagine 388 each carry an N-linked (GlcNAc...) asparagine glycan. A helical transmembrane segment spans residues 430-453 (FGVSIAVGLAAFACVLLVVLFIMI). At 454-825 (NKYGRRSKFG…ATPIYLDILG (372 aa)) the chain is on the cytoplasmic side. A Phosphoserine modification is found at serine 493. Phosphotyrosine; by autocatalysis is present on tyrosine 516. The region spanning 538 to 825 (IVLKRELGEG…ATPIYLDILG (288 aa)) is the Protein kinase domain. ATP contacts are provided by residues 544–552 (LGEGAFGKV) and lysine 572. Aspartate 679 serves as the catalytic Proton acceptor. 3 positions are modified to phosphotyrosine; by autocatalysis: tyrosine 705, tyrosine 709, and tyrosine 710.

Belongs to the protein kinase superfamily. Tyr protein kinase family. Insulin receptor subfamily. As to quaternary structure, exists in a dynamic equilibrium between monomeric (low affinity) and dimeric (high affinity) structures. Binds SH2B2. Interacts with SQSTM1 and KIDINS220. Interacts with PTPRS. Interacts with MAPK8IP3/JIP3. Post-translationally, ligand-mediated auto-phosphorylation.

Its subcellular location is the membrane. The catalysed reaction is L-tyrosyl-[protein] + ATP = O-phospho-L-tyrosyl-[protein] + ADP + H(+). Functionally, receptor tyrosine kinase involved in nervous system and probably heart development. Upon binding of its ligand NTF3/neurotrophin-3, NTRK3 autophosphorylates and activates different signaling pathways, including the phosphatidylinositol 3-kinase/AKT and the MAPK pathways, that control cell survival and differentiation. This Macaca fascicularis (Crab-eating macaque) protein is NT-3 growth factor receptor (NTRK3).